A 212-amino-acid polypeptide reads, in one-letter code: Golgi SNAP receptor complex member 2 homolog memb-1 (212 aa).

Residues 1–189 are Cytoplasmic-facing; sequence MEAQYQSTNF…QVIDRRVRED (189 aa). The chain crosses the membrane as a helical; Anchor for type IV membrane protein span at residues 190 to 210; that stretch reads WIFVIGCIVCCIFMYAFYRFW. The Vesicular portion of the chain corresponds to 211 to 212; sequence RG.

Belongs to the GOSR2 family. In terms of assembly, part of a unique SNARE complex.

Its subcellular location is the golgi apparatus. The protein resides in the cis-Golgi network membrane. It localises to the golgi apparatus membrane. The protein localises to the endoplasmic reticulum membrane. Functionally, involved in transport of proteins from the cis/medial-Golgi to the trans-Golgi network. In Caenorhabditis briggsae, this protein is Golgi SNAP receptor complex member 2 homolog memb-1.